Consider the following 425-residue polypeptide: Enolase (425 aa).

Q170 contributes to the (2R)-2-phosphoglycerate binding site. The Proton donor role is filled by E214. Positions 250, 291, and 317 each coordinate Mg(2+). (2R)-2-phosphoglycerate contacts are provided by K342, R371, S372, and K393. Residue K342 is the Proton acceptor of the active site.

Belongs to the enolase family. Mg(2+) is required as a cofactor.

The protein resides in the cytoplasm. The protein localises to the secreted. Its subcellular location is the cell surface. The catalysed reaction is (2R)-2-phosphoglycerate = phosphoenolpyruvate + H2O. Its pathway is carbohydrate degradation; glycolysis; pyruvate from D-glyceraldehyde 3-phosphate: step 4/5. In terms of biological role, catalyzes the reversible conversion of 2-phosphoglycerate (2-PG) into phosphoenolpyruvate (PEP). It is essential for the degradation of carbohydrates via glycolysis. The polypeptide is Enolase (Methanococcoides burtonii (strain DSM 6242 / NBRC 107633 / OCM 468 / ACE-M)).